The sequence spans 879 residues: Alanine--tRNA ligase (879 aa).

4 residues coordinate Zn(2+): H564, H568, C666, and H670.

Belongs to the class-II aminoacyl-tRNA synthetase family. Zn(2+) is required as a cofactor.

It is found in the cytoplasm. The catalysed reaction is tRNA(Ala) + L-alanine + ATP = L-alanyl-tRNA(Ala) + AMP + diphosphate. Functionally, catalyzes the attachment of alanine to tRNA(Ala) in a two-step reaction: alanine is first activated by ATP to form Ala-AMP and then transferred to the acceptor end of tRNA(Ala). Also edits incorrectly charged Ser-tRNA(Ala) and Gly-tRNA(Ala) via its editing domain. This is Alanine--tRNA ligase from Crocosphaera subtropica (strain ATCC 51142 / BH68) (Cyanothece sp. (strain ATCC 51142)).